We begin with the raw amino-acid sequence, 162 residues long: NADPH-dependent 7-cyano-7-deazaguanine reductase (162 aa).

The Thioimide intermediate role is filled by Cys53. Asp60 serves as the catalytic Proton donor. Substrate is bound by residues 75-77 and 94-95; these read VES and HE.

The protein belongs to the GTP cyclohydrolase I family. QueF type 1 subfamily.

It is found in the cytoplasm. It catalyses the reaction 7-aminomethyl-7-carbaguanine + 2 NADP(+) = 7-cyano-7-deazaguanine + 2 NADPH + 3 H(+). Its pathway is tRNA modification; tRNA-queuosine biosynthesis. Functionally, catalyzes the NADPH-dependent reduction of 7-cyano-7-deazaguanine (preQ0) to 7-aminomethyl-7-deazaguanine (preQ1). The polypeptide is NADPH-dependent 7-cyano-7-deazaguanine reductase (Exiguobacterium sibiricum (strain DSM 17290 / CCUG 55495 / CIP 109462 / JCM 13490 / 255-15)).